We begin with the raw amino-acid sequence, 200 residues long: Alpha/beta-tubulin-N-acetyltransferase 9 (200 aa).

The 148-residue stretch at Glu34–Thr181 folds into the N-acetyltransferase domain.

Belongs to the acetyltransferase family. GNAT subfamily. As to quaternary structure, interacts with microtubules as well as alpha/beta-tubulin heterodimers.

It is found in the nucleus. Its subcellular location is the cytoplasm. It localises to the cytoskeleton. The protein resides in the spindle. The protein localises to the spindle pole. The enzyme catalyses N-terminal L-methionyl-[tubulin] + acetyl-CoA = N-terminal N(alpha)-acetyl-L-methionyl-[tubulin] + CoA + H(+). N-acetyltransferase that mediates the acetylation of the N-terminal residues of alpha- and beta-tubulin. Required for microtubule stability and inhibition of JNK signaling to promote cell survival during development, possibly acting independently of its N-acetyltransferase activity. Necessary for the stabilization of spindle microtubules and for mitosis progression. Regulates microtubule stability by inhibiting Spastin-mediated depolymerization and promoting Eb1-mediated polymerization. The protein is Alpha/beta-tubulin-N-acetyltransferase 9 of Drosophila melanogaster (Fruit fly).